Here is a 557-residue protein sequence, read N- to C-terminus: Urocanate hydratase (557 aa).

The tract at residues 1–20 is disordered; it reads MSNPRHNEREVRSPRGDELN. Residues 52 to 53, Gln-130, 176 to 178, Glu-196, Arg-201, 242 to 243, 263 to 267, 273 to 274, and Tyr-322 each bind NAD(+); these read GG, GMG, NA, QTSAH, and YL. The active site involves Cys-410. Gly-492 contributes to the NAD(+) binding site.

The protein belongs to the urocanase family. It depends on NAD(+) as a cofactor.

The protein resides in the cytoplasm. It carries out the reaction 4-imidazolone-5-propanoate = trans-urocanate + H2O. The protein operates within amino-acid degradation; L-histidine degradation into L-glutamate; N-formimidoyl-L-glutamate from L-histidine: step 2/3. Its function is as follows. Catalyzes the conversion of urocanate to 4-imidazolone-5-propionate. In Brucella melitensis biotype 1 (strain ATCC 23456 / CCUG 17765 / NCTC 10094 / 16M), this protein is Urocanate hydratase.